The primary structure comprises 366 residues: Sec-independent protein translocase protein TatC (366 aa).

7 consecutive transmembrane segments (helical) span residues 42-62, 70-90, 97-117, 134-154, 179-199, 207-227, and 230-250; these read VLAVLVLFLILFPFRNELFTM, HMPAGSTMIAVEVASPFFIPL, AVFIAIPFLLYQLWAFIAPGL, ILFYLGAAFAYFVVFPVVFGF, LFFAFGFVFEVPVAIVLLVIV, LAGFRRYAILIAFIIAAILTP, and VLSQFMMALPIIMLYEFGLFV. A compositionally biased stretch (acidic residues) spans 266–279; that stretch reads EAEESGAADDESDE. Positions 266–366 are disordered; sequence EAEESGAADD…PSPKKPDSPV (101 aa). Basic and acidic residues-rich tracts occupy residues 281–290 and 301–318; these read VSARHAEYEA and DMDKAFDEAEADQRRLES. Polar residues predominate over residues 319–333; sequence DSSASDDGPESNTAG.

Belongs to the TatC family. The Tat system comprises two distinct complexes: a TatABC complex, containing multiple copies of TatA, TatB and TatC subunits, and a separate TatA complex, containing only TatA subunits. Substrates initially bind to the TatABC complex, which probably triggers association of the separate TatA complex to form the active translocon.

Its subcellular location is the cell inner membrane. In terms of biological role, part of the twin-arginine translocation (Tat) system that transports large folded proteins containing a characteristic twin-arginine motif in their signal peptide across membranes. Together with TatB, TatC is part of a receptor directly interacting with Tat signal peptides. This chain is Sec-independent protein translocase protein TatC, found in Halothiobacillus neapolitanus (strain ATCC 23641 / c2) (Thiobacillus neapolitanus).